A 758-amino-acid chain; its full sequence is 5-methyltetrahydropteroyltriglutamate--homocysteine methyltransferase (758 aa).

Residues 16 to 19 (RELK) and K116 contribute to the 5-methyltetrahydropteroyltri-L-glutamate site. L-homocysteine is bound by residues 436-438 (IGS) and E489. Residues 436–438 (IGS) and E489 each bind L-methionine. 5-methyltetrahydropteroyltri-L-glutamate-binding positions include 520 to 521 (RC) and W566. D604 contributes to the L-homocysteine binding site. D604 is an L-methionine binding site. A 5-methyltetrahydropteroyltri-L-glutamate-binding site is contributed by E610. 3 residues coordinate Zn(2+): H646, C648, and E670. The active-site Proton donor is the H699. C731 is a binding site for Zn(2+).

It belongs to the vitamin-B12 independent methionine synthase family. The cofactor is Zn(2+).

The catalysed reaction is 5-methyltetrahydropteroyltri-L-glutamate + L-homocysteine = tetrahydropteroyltri-L-glutamate + L-methionine. It participates in amino-acid biosynthesis; L-methionine biosynthesis via de novo pathway; L-methionine from L-homocysteine (MetE route): step 1/1. Catalyzes the transfer of a methyl group from 5-methyltetrahydrofolate to homocysteine resulting in methionine formation. The chain is 5-methyltetrahydropteroyltriglutamate--homocysteine methyltransferase from Nitrosococcus oceani (strain ATCC 19707 / BCRC 17464 / JCM 30415 / NCIMB 11848 / C-107).